We begin with the raw amino-acid sequence, 999 residues long: Probable basic-leucine zipper transcription factor N (999 aa).

Composition is skewed to low complexity over residues 1–79 and 88–126; these read MYQS…YQQQ and NNVN…INNN. A disordered region spans residues 1–126; that stretch reads MYQSIPQQGN…NNNNGNINNN (126 aa). Coiled coils occupy residues 148-198 and 232-282; these read QQQQ…MVLM and GIQQ…QQIS. Positions 286–302 are enriched in polar residues; sequence ESASPYYSTPIQSNTML. 3 disordered regions span residues 286–406, 450–533, and 601–620; these read ESAS…SQDQ, QQLH…PTIN, and EKQK…NYRQ. The span at 303–347 shows a compositional bias: low complexity; the sequence is SIPSSPGIPSSIPQLNNSNNINNNSNNNNNNNNNNNNNNINYNSN. Positions 348–406 are enriched in polar residues; it reads MASNFISQHSNNGSNTSSPVPQTTYLQNSGGNFNAYNGSNTNSPITPSSYLQPTTSQDQ. A coiled-coil region spans residues 423–451; sequence IQQQQKILQQQQQQQLLLQQQIQQQQQQQ. Over residues 450-517 the composition is skewed to low complexity; it reads QQLHQPQSPQ…IIQPTTIQPQ (68 aa). The 64-residue stretch at 601-664 folds into the bZIP domain; sequence EKQKTRRRAS…KKLLHENNIL (64 aa). The segment at 602-632 is basic motif; sequence KQKTRRRASQNLASRNYRQRKKQYVNEVEDR. Residues 636–643 are leucine-zipper; sequence IVQENERL. Disordered regions lie at residues 665-711, 779-807, and 870-899; these read KSGG…VVET, QSCP…SPYE, and VNNG…TTTT. A compositionally biased stretch (acidic residues) spans 682–692; it reads SEDEDEDDFDQ. The stretch at 921-950 forms a coiled coil; that stretch reads HLVQLSGLLDKLKENIDHENETLIQTYEKL.

This sequence belongs to the bZIP family.

The protein resides in the nucleus. Functionally, probable transcriptional regulator. The sequence is that of Probable basic-leucine zipper transcription factor N (bzpN) from Dictyostelium discoideum (Social amoeba).